Consider the following 706-residue polypeptide: Transcription factor 12 (706 aa).

A disordered region spans residues 25 to 109; sequence AMFSPPVNSG…TPFMNSNLIG (85 aa). Polar residues-rich tracts occupy residues 30–48 and 56–76; these read PVNSGKTRPTTLGSSQFSG and GTTSWGTSGQPSPSYDSSRGF. A phosphoserine mark is found at Ser47, Ser67, and Ser79. Residues 81–93 show a composition bias toward basic and acidic residues; the sequence is HYSDHLNDSRLGT. Phosphoserine is present on Ser98. A Glycyl lysine isopeptide (Lys-Gly) (interchain with G-Cter in SUMO2) cross-link involves residue Lys110. Residues Ser116 and Ser124 each carry the phosphoserine modification. The tract at residues 119–140 is leucine-zipper; sequence LYSRDSGLSGCQSSLLRQDLGL. Disordered stretches follow at residues 140–222 and 249–313; these read LGSP…SMFA and FGGI…ASHT. Over residues 144 to 163 the composition is skewed to polar residues; it reads AQLSSSGKPGTPYYSFSATS. Lys181 participates in a covalent cross-link: Glycyl lysine isopeptide (Lys-Gly) (interchain with G-Cter in SUMO2). The short motif at 181 to 188 is the Nuclear localization signal element; sequence KKVRKVPP. The span at 256 to 269 shows a compositional bias: low complexity; the sequence is STSHMSQSSSYGSL. Residues 282–306 show a composition bias toward polar residues; it reads VSPTDINTSLPPMSSFHRGSTSSSP. Thr313 bears the Phosphothreonine mark. Ser333 is modified (phosphoserine). 2 disordered regions span residues 349–392 and 520–604; these read PDHT…YENS and HKTP…ERRM. Residues 352 to 363 are compositionally biased toward low complexity; the sequence is TSSSFPSNPSTP. Polar residues-rich tracts occupy residues 364–376 and 383–392; these read VGSPSPLTGTSQW and APSSPSYENS. Residue Ser392 is modified to Phosphoserine. 2 stretches are compositionally biased toward basic and acidic residues: residues 542-554 and 560-575; these read IKTENKEKDENLH and DDMKSDDESSQKDIKV. A Glycyl lysine isopeptide (Lys-Gly) (interchain with G-Cter in SUMO2) cross-link involves residue Lys543. Ser564 bears the Phosphoserine mark. Residue Lys574 forms a Glycyl lysine isopeptide (Lys-Gly) (interchain with G-Cter in SUMO2) linkage. Residue Thr581 is modified to Phosphothreonine. 2 positions are modified to phosphoserine: Ser582 and Ser583. A compositionally biased stretch (basic and acidic residues) spans 592–604; that stretch reads PEQKIEREKERRM. In terms of domain architecture, bHLH spans 601–654; that stretch reads ERRMANNARERLRVRDINEAFKELGRMCQLHLKSEKPQTKLLILHQAVAVILSL. Glycyl lysine isopeptide (Lys-Gly) (interchain with G-Cter in SUMO2) cross-links involve residues Lys633 and Lys677. The class A specific domain stretch occupies residues 656–679; that stretch reads QQVRERNLNPKAACLKRREEEKVS. The segment at 674–706 is disordered; the sequence is EEEKVSAASAEPPNTLPGAHPGLSESTNPMGHL. Residues 697-706 show a composition bias toward polar residues; it reads SESTNPMGHL.

Efficient DNA binding requires dimerization with another bHLH protein. Forms homo- or heterooligomers with myogenin, E12 and ITF2 proteins and RUNX1T1. Interacts with PTF1A. Interacts with NEUROD2. Interacts with BHLHA9. Widely expressed.

It is found in the nucleus. Functionally, transcriptional regulator. Involved in the initiation of neuronal differentiation. Activates transcription by binding to the E box (5'-CANNTG-3'). May be involved in the functional network that regulates the development of the GnRH axis. The chain is Transcription factor 12 (Tcf12) from Mus musculus (Mouse).